The primary structure comprises 173 residues: Large ribosomal subunit protein uL14mz (173 aa).

Residues 1–61 constitute a mitochondrion transit peptide; sequence MAAAFASRLT…TVLKVVDNSG (61 aa).

Belongs to the universal ribosomal protein uL14 family. As to quaternary structure, part of the mitochondrial 50S ribosomal subunit. Mostly expressed in leaves and inflorescences, including floral organs and meristems, and, to a lower extent, in pistils.

The protein localises to the mitochondrion. Functionally, binds to 23S rRNA in mitochondrion. The polypeptide is Large ribosomal subunit protein uL14mz (HLP) (Arabidopsis thaliana (Mouse-ear cress)).